A 744-amino-acid chain; its full sequence is Phosphoribosylformylglycinamidine synthase subunit PurL (744 aa).

The active site involves His-50. ATP contacts are provided by Tyr-53 and Lys-92. A Mg(2+)-binding site is contributed by Glu-94. Residues 95-98 (SHNH) and Arg-117 each bind substrate. The active-site Proton acceptor is the His-96. Position 118 (Asp-118) interacts with Mg(2+). A substrate-binding site is contributed by Gln-241. Position 269 (Asp-269) interacts with Mg(2+). 313 to 315 (ESQ) serves as a coordination point for substrate. Positions 494 and 531 each coordinate ATP. Asn-532 contributes to the Mg(2+) binding site. Ser-534 contacts substrate.

This sequence belongs to the FGAMS family. As to quaternary structure, monomer. Part of the FGAM synthase complex composed of 1 PurL, 1 PurQ and 2 PurS subunits.

Its subcellular location is the cytoplasm. It catalyses the reaction N(2)-formyl-N(1)-(5-phospho-beta-D-ribosyl)glycinamide + L-glutamine + ATP + H2O = 2-formamido-N(1)-(5-O-phospho-beta-D-ribosyl)acetamidine + L-glutamate + ADP + phosphate + H(+). It participates in purine metabolism; IMP biosynthesis via de novo pathway; 5-amino-1-(5-phospho-D-ribosyl)imidazole from N(2)-formyl-N(1)-(5-phospho-D-ribosyl)glycinamide: step 1/2. Its function is as follows. Part of the phosphoribosylformylglycinamidine synthase complex involved in the purines biosynthetic pathway. Catalyzes the ATP-dependent conversion of formylglycinamide ribonucleotide (FGAR) and glutamine to yield formylglycinamidine ribonucleotide (FGAM) and glutamate. The FGAM synthase complex is composed of three subunits. PurQ produces an ammonia molecule by converting glutamine to glutamate. PurL transfers the ammonia molecule to FGAR to form FGAM in an ATP-dependent manner. PurS interacts with PurQ and PurL and is thought to assist in the transfer of the ammonia molecule from PurQ to PurL. This chain is Phosphoribosylformylglycinamidine synthase subunit PurL, found in Chelativorans sp. (strain BNC1).